The following is a 360-amino-acid chain: Phospho-N-acetylmuramoyl-pentapeptide-transferase (360 aa).

10 consecutive transmembrane segments (helical) span residues Tyr20–Gly40, Thr71–Ala91, Leu93–Phe113, Leu134–Ala154, Ala168–Ala188, Gly199–Val219, Leu239–Pro259, Val263–Val283, Ile288–Val308, and Gln337–Leu357.

This sequence belongs to the glycosyltransferase 4 family. MraY subfamily. Mg(2+) is required as a cofactor.

The protein resides in the cell inner membrane. It carries out the reaction UDP-N-acetyl-alpha-D-muramoyl-L-alanyl-gamma-D-glutamyl-meso-2,6-diaminopimeloyl-D-alanyl-D-alanine + di-trans,octa-cis-undecaprenyl phosphate = di-trans,octa-cis-undecaprenyl diphospho-N-acetyl-alpha-D-muramoyl-L-alanyl-D-glutamyl-meso-2,6-diaminopimeloyl-D-alanyl-D-alanine + UMP. The protein operates within cell wall biogenesis; peptidoglycan biosynthesis. Catalyzes the initial step of the lipid cycle reactions in the biosynthesis of the cell wall peptidoglycan: transfers peptidoglycan precursor phospho-MurNAc-pentapeptide from UDP-MurNAc-pentapeptide onto the lipid carrier undecaprenyl phosphate, yielding undecaprenyl-pyrophosphoryl-MurNAc-pentapeptide, known as lipid I. The sequence is that of Phospho-N-acetylmuramoyl-pentapeptide-transferase from Paracoccus denitrificans (strain Pd 1222).